Reading from the N-terminus, the 209-residue chain is Mitochondrial import inner membrane translocase subunit Tim23 (209 aa).

The next 3 helical transmembrane spans lie at 73-93, 125-145, and 181-197; these read FELAFFTIGGCCMTGAAFGAM, ALWANTLGSLALLYSAFGVII, and GLTGLTLTSLYALYNNW.

The protein belongs to the Tim17/Tim22/Tim23 family. Component of the TIM23 complex at least composed of TIMM23, TIMM17 (TIMM17A or TIMM17B) and TIMM50; within this complex, directly interacts with TIMM50. The complex interacts with the TIMM44 component of the PAM complex and with DNAJC15. Upon mitochondrial depolarization, interacts with PINK1; the interaction is required for PINK1 accumulation at the outer mitochondrial membrane, kinase activation by autophosphorylation and PRKN recruitement to mitochondria.

The protein localises to the mitochondrion inner membrane. Functionally, essential component of the TIM23 complex, a complex that mediates the translocation of transit peptide-containing proteins across the mitochondrial inner membrane. Has a role in the activation of stress-induced mitophagy by protecting PINK1 from OMA1-mediated degradation and facilitating its accumulation at the outer mitochondrial membrane in response to depolarization. The sequence is that of Mitochondrial import inner membrane translocase subunit Tim23 (TIMM23) from Homo sapiens (Human).